The primary structure comprises 538 residues: Telomerase Cajal body protein 1 (538 aa).

Residues 1–53 are disordered; sequence MKTSEERLVVPDSLSSDQAPAPVPQGSPVDENTDSEPVPQPCGGDDRSQVAAD. Phosphoserine occurs at positions 27 and 87. Positions 92–128 are disordered; that stretch reads EQELSENVSLPVEDTNQPELASGEDVEGVSEEPGPVD. The span at 113–128 shows a compositional bias: acidic residues; the sequence is SGEDVEGVSEEPGPVD. 6 WD repeats span residues 154 to 194, 210 to 255, 260 to 301, 311 to 352, 353 to 393, and 399 to 438; these read AHSE…YSAT, EGDT…LRAS, NHLD…RDCE, GQSG…ALLG, GHQG…HLLW, and VTTN…GDSS. 2 disordered regions span residues 471 to 491 and 509 to 538; these read QRMF…GDLP and CGGG…DGLI. A Phosphothreonine modification is found at T478. The residue at position 480 (S480) is a Phosphoserine. Over residues 529–538 the composition is skewed to gly residues; that stretch reads RAEGCGDGLI.

It belongs to the TCAB1 family. As to quaternary structure, component of the telomerase holoenzyme complex composed of one molecule of TERT, one molecule of WRAP53/TCAB1, two molecules of H/ACA ribonucleoprotein complex subunits DKC1, NOP10, NHP2 and GAR1, and a telomerase RNA template component (TERC). The telomerase holoenzyme complex is associated with TEP1, SMG6/EST1A and POT1. Interacts with the chaperonin-containing T-complex (TRiC) complex; which mediates the folding of WRAP53/TCAB1. Interacts with COIL. Interacts with SMN1. Interacts with RNF8. Interacts with histone H2AX. As to expression, preferentially expressed in testis.

The protein localises to the nucleus. It is found in the cajal body. It localises to the chromosome. Its subcellular location is the telomere. RNA chaperone that plays a key role in telomere maintenance and RNA localization to Cajal bodies. Specifically recognizes and binds the Cajal body box (CAB box) present in both small Cajal body RNAs (scaRNAs) and telomerase RNA template component (TERC). Essential component of the telomerase holoenzyme complex, a ribonucleoprotein complex essential for the replication of chromosome termini that elongates telomeres in most eukaryotes. In the telomerase holoenzyme complex, required to stimulate the catalytic activity of the complex. Acts by specifically binding the CAB box of the TERC RNA and controlling the folding of the CR4/CR5 region of the TERC RNA, a critical step for telomerase activity. In addition, also controls telomerase holoenzyme complex localization to Cajal body. During S phase, required for delivery of TERC to telomeres during S phase and for telomerase activity. In addition to its role in telomere maintenance, also required for Cajal body formation, probably by mediating localization of scaRNAs to Cajal bodies. Also plays a role in DNA repair: relocalizes to sites of DNA double-strand breaks in response to DNA damage and promotes the repair of DNA double-strand breaks. Acts by recruiting the ubiquitin ligase RNF8 to DNA breaks and promote both homologous recombination (HR) and non-homologous end joining (NHEJ). The sequence is that of Telomerase Cajal body protein 1 from Mesocricetus auratus (Golden hamster).